A 192-amino-acid chain; its full sequence is Small ribosomal subunit protein uS4B (192 aa).

Phosphoserine is present on residues S89 and S179. Positions R107–Q181 constitute an S4 RNA-binding domain. Positions G166–E192 are disordered.

Belongs to the universal ribosomal protein uS4 family. Component of the small ribosomal subunit (SSU). Mature yeast ribosomes consist of a small (40S) and a large (60S) subunit. The 40S small subunit contains 1 molecule of ribosomal RNA (18S rRNA) and at least 33 different proteins. The large 60S subunit contains 3 rRNA molecules (25S, 5.8S and 5S rRNA) and at least 46 different proteins. Interacts with snoRNA U3. uS11 interacts with MPP10. Component of the ribosomal small subunit (SSU) processome composed of at least 40 protein subunits and snoRNA U3.

The protein localises to the cytoplasm. In terms of biological role, component of the ribosome, a large ribonucleoprotein complex responsible for the synthesis of proteins in the cell. The small ribosomal subunit (SSU) binds messenger RNAs (mRNAs) and translates the encoded message by selecting cognate aminoacyl-transfer RNA (tRNA) molecules. The large subunit (LSU) contains the ribosomal catalytic site termed the peptidyl transferase center (PTC), which catalyzes the formation of peptide bonds, thereby polymerizing the amino acids delivered by tRNAs into a polypeptide chain. The nascent polypeptides leave the ribosome through a tunnel in the LSU and interact with protein factors that function in enzymatic processing, targeting, and the membrane insertion of nascent chains at the exit of the ribosomal tunnel. uS4 is involved in nucleolar processing of pre-18S ribosomal RNA and ribosome assembly. This chain is Small ribosomal subunit protein uS4B (rps902), found in Schizosaccharomyces pombe (strain 972 / ATCC 24843) (Fission yeast).